A 625-amino-acid polypeptide reads, in one-letter code: Phosphomethylpyrimidine synthase (625 aa).

Residues Asn230, Met259, Tyr288, His324, 344–346, 385–388, and Glu424 each bind substrate; these read SRG and DGLR. Zn(2+) is bound at residue His428. Position 451 (Tyr451) interacts with substrate. Residue His492 participates in Zn(2+) binding. [4Fe-4S] cluster contacts are provided by Cys572, Cys575, and Cys580.

It belongs to the ThiC family. Homodimer. Requires [4Fe-4S] cluster as cofactor.

It catalyses the reaction 5-amino-1-(5-phospho-beta-D-ribosyl)imidazole + S-adenosyl-L-methionine = 4-amino-2-methyl-5-(phosphooxymethyl)pyrimidine + CO + 5'-deoxyadenosine + formate + L-methionine + 3 H(+). Its pathway is cofactor biosynthesis; thiamine diphosphate biosynthesis. Its function is as follows. Catalyzes the synthesis of the hydroxymethylpyrimidine phosphate (HMP-P) moiety of thiamine from aminoimidazole ribotide (AIR) in a radical S-adenosyl-L-methionine (SAM)-dependent reaction. The chain is Phosphomethylpyrimidine synthase from Xanthomonas campestris pv. campestris (strain 8004).